Reading from the N-terminus, the 393-residue chain is Methylthioribose kinase (393 aa).

Residues Asn-38, Lys-53, and 107–109 each bind ATP; that span reads EDL. Asp-225 provides a ligand contact to substrate. Residue 242–244 participates in ATP binding; it reads DPE. Arg-332 is a binding site for substrate.

It belongs to the methylthioribose kinase family. In terms of assembly, homodimer.

The catalysed reaction is 5-(methylsulfanyl)-D-ribose + ATP = 5-(methylsulfanyl)-alpha-D-ribose 1-phosphate + ADP + H(+). It participates in amino-acid biosynthesis; L-methionine biosynthesis via salvage pathway; S-methyl-5-thio-alpha-D-ribose 1-phosphate from S-methyl-5'-thioadenosine (hydrolase route): step 2/2. Its function is as follows. Catalyzes the phosphorylation of methylthioribose into methylthioribose-1-phosphate. This is Methylthioribose kinase from Bacillus cereus (strain 03BB102).